The chain runs to 252 residues: Geranylgeranylglyceryl phosphate synthase (252 aa).

Mg(2+) contacts are provided by Asp26 and Ser55. Residues 174 to 180 (YLEAGSG), 205 to 206 (GG), and 227 to 228 (GT) contribute to the sn-glycerol 1-phosphate site.

This sequence belongs to the GGGP/HepGP synthase family. Group II subfamily. It depends on Mg(2+) as a cofactor.

The protein localises to the cytoplasm. The catalysed reaction is sn-glycerol 1-phosphate + (2E,6E,10E)-geranylgeranyl diphosphate = sn-3-O-(geranylgeranyl)glycerol 1-phosphate + diphosphate. It functions in the pathway membrane lipid metabolism; glycerophospholipid metabolism. Functionally, prenyltransferase that catalyzes the transfer of the geranylgeranyl moiety of geranylgeranyl diphosphate (GGPP) to the C3 hydroxyl of sn-glycerol-1-phosphate (G1P). This reaction is the first ether-bond-formation step in the biosynthesis of archaeal membrane lipids. This is Geranylgeranylglyceryl phosphate synthase from Thermococcus gammatolerans (strain DSM 15229 / JCM 11827 / EJ3).